A 231-amino-acid polypeptide reads, in one-letter code: Nucleoside diphosphate kinase II, chloroplastic (231 aa).

The N-terminal 62 residues, 1–62, are a transit peptide targeting the chloroplast; sequence MVGATVVSKW…RNSASRRRLR (62 aa). ATP contacts are provided by Lys-91, Phe-139, Arg-167, Thr-173, Arg-184, and Asn-194. Residue His-197 is the Pros-phosphohistidine intermediate of the active site.

This sequence belongs to the NDK family. As to quaternary structure, interacts with PHYA, MPK3 and MPK6. Requires Mg(2+) as cofactor. Autophosphorylated.

The protein resides in the plastid. The protein localises to the chloroplast. The enzyme catalyses a 2'-deoxyribonucleoside 5'-diphosphate + ATP = a 2'-deoxyribonucleoside 5'-triphosphate + ADP. It carries out the reaction a ribonucleoside 5'-diphosphate + ATP = a ribonucleoside 5'-triphosphate + ADP. Functionally, major role in the synthesis of nucleoside triphosphates other than ATP. The ATP gamma phosphate is transferred to the NDP beta phosphate via a ping-pong mechanism, using a phosphorylated active-site intermediate. May activate MPK3 and MPK6. May be involved in the regulation of cellular redox state and hydrogen peroxide-mediated MAP kinase signaling. This chain is Nucleoside diphosphate kinase II, chloroplastic (NDPK2), found in Arabidopsis thaliana (Mouse-ear cress).